The primary structure comprises 122 residues: Biogenesis of lysosome-related organelles complex 1 subunit CNL1 (122 aa).

The segment covering 1-10 (MQDNSSHSRE) has biased composition (basic and acidic residues). The tract at residues 1–21 (MQDNSSHSRESASAGDDPLGI) is disordered. The stretch at 63-95 (ENTIDKNIAKFKELLEKCDTLENHYEMLNQLAI) forms a coiled coil.

It belongs to the BLOC1S4 family. As to quaternary structure, component of the biogenesis of lysosome-related organelles complex-1 (BLOC-1) composed of at least BLI1, BLS1, CNL1, KXD1, SNN1 and VAB2.

It is found in the cytoplasm. In terms of biological role, component of the biogenesis of lysosome-related organelles complex-1 (BLOC-1), a complex that is involved in endosomal cargo sorting. The chain is Biogenesis of lysosome-related organelles complex 1 subunit CNL1 (CLN1) from Saccharomyces cerevisiae (strain Lalvin QA23) (Baker's yeast).